Consider the following 381-residue polypeptide: Protein pelota homolog (381 aa).

It belongs to the eukaryotic release factor 1 family. Pelota subfamily. Component of the Pelota-HBS1L complex, also named Dom34-Hbs1 complex, composed of pelo-1 and hbs-1. A divalent metal cation is required as a cofactor.

The protein resides in the cytoplasm. The protein localises to the nucleus. Functionally, component of the Pelota-HBS1L complex, a complex that recognizes stalled ribosomes and triggers the No-Go Decay (NGD) pathway. In the Pelota-HBS1L complex, pelo-1 recognizes ribosomes stalled at the 3' end of an mRNA and engages stalled ribosomes by destabilizing mRNA in the mRNA channel. Following ribosome-binding, the Pelota-HBS1L complex promotes the disassembly of stalled ribosomes, followed by degradation of damaged mRNAs as part of the NGD pathway. The chain is Protein pelota homolog from Caenorhabditis elegans.